Consider the following 204-residue polypeptide: uncharacterized protein (204 aa).

It localises to the cytoplasm. It is found in the nucleus. This is an uncharacterized protein from Schizosaccharomyces pombe (strain 972 / ATCC 24843) (Fission yeast).